Consider the following 144-residue polypeptide: D-aminoacyl-tRNA deacylase (144 aa).

Positions 136–137 (GP) match the Gly-cisPro motif, important for rejection of L-amino acids motif.

This sequence belongs to the DTD family. As to quaternary structure, homodimer.

It localises to the cytoplasm. It carries out the reaction glycyl-tRNA(Ala) + H2O = tRNA(Ala) + glycine + H(+). It catalyses the reaction a D-aminoacyl-tRNA + H2O = a tRNA + a D-alpha-amino acid + H(+). In terms of biological role, an aminoacyl-tRNA editing enzyme that deacylates mischarged D-aminoacyl-tRNAs. Also deacylates mischarged glycyl-tRNA(Ala), protecting cells against glycine mischarging by AlaRS. Acts via tRNA-based rather than protein-based catalysis; rejects L-amino acids rather than detecting D-amino acids in the active site. By recycling D-aminoacyl-tRNA to D-amino acids and free tRNA molecules, this enzyme counteracts the toxicity associated with the formation of D-aminoacyl-tRNA entities in vivo and helps enforce protein L-homochirality. The sequence is that of D-aminoacyl-tRNA deacylase from Haemophilus influenzae (strain PittEE).